The following is a 413-amino-acid chain: NAD(P)H oxidoreductase RTN4IP1, mitochondrial (413 aa).

The N-terminal 23 residues, 1 to 23 (MTAAGFNSILCLRQLVRLNRRQY), are a transit peptide targeting the mitochondrion. The tract at residues 27 to 52 (AKSVLSGSQTNDQATPPPTSKSADKM) is disordered. Residues 31–40 (LSGSQTNDQA) show a composition bias toward polar residues. One can recognise an Enoyl reductase (ER) domain in the interval 61–405 (GDIDELQLSE…SGHLRGKIVV (345 aa)). 9 residues coordinate NADPH: Ser228, Gly230, Val231, Ser251, Tyr269, Gly353, Phe355, His398, and Arg400.

It belongs to the zinc-containing alcohol dehydrogenase family. Quinone oxidoreductase subfamily.

The protein resides in the mitochondrion matrix. It catalyses the reaction a quinone + NADH + H(+) = a quinol + NAD(+). The catalysed reaction is a quinone + NADPH + H(+) = a quinol + NADP(+). The protein operates within cofactor biosynthesis; ubiquinone biosynthesis. In terms of biological role, NAD(P)H oxidoreductase. Involved in the ubiquinone biosynthetic pathway. This is NAD(P)H oxidoreductase RTN4IP1, mitochondrial from Drosophila melanogaster (Fruit fly).